Reading from the N-terminus, the 341-residue chain is MKALLRQVAEGKDLTEAQAEAAMTLMMTGEATPAQVAAFLMALRIKGETVAEITGAARVMRERAIRIHHSRPLVVDTCGTGGDGSHTFNISTTAAFVVAGAGVAVAKHGNRAATSLTGSADVLEALGIHLDLTPEEVGRCIDEVGIGFLYAPALHTSMKHVAPVRREIGLRNIFNLLGPLTNPAMAQAQLMGVYDPNLTEPLARVLGNLGVKHALVVHGTDGVDEISISAPTVVSEMRDGFVHTYRVVPEDVGLSRAPREYIRGGTKEENARITESVLSGEPGPRRDVVLLNAAAALLAADRVRTLREGVELAAQSIDSGEARRVLERMREFTHRLRAESA.

Residues Gly-79, 82 to 83 (GD), Thr-87, 89 to 92 (NIST), 107 to 115 (KHGNRAATS), and Ser-119 contribute to the 5-phospho-alpha-D-ribose 1-diphosphate site. Gly-79 lines the anthranilate pocket. Ser-91 lines the Mg(2+) pocket. An anthranilate-binding site is contributed by Asn-110. An anthranilate-binding site is contributed by Arg-165. 2 residues coordinate Mg(2+): Asp-224 and Glu-225.

It belongs to the anthranilate phosphoribosyltransferase family. As to quaternary structure, homodimer. Mg(2+) serves as cofactor.

It catalyses the reaction N-(5-phospho-beta-D-ribosyl)anthranilate + diphosphate = 5-phospho-alpha-D-ribose 1-diphosphate + anthranilate. The protein operates within amino-acid biosynthesis; L-tryptophan biosynthesis; L-tryptophan from chorismate: step 2/5. Functionally, catalyzes the transfer of the phosphoribosyl group of 5-phosphorylribose-1-pyrophosphate (PRPP) to anthranilate to yield N-(5'-phosphoribosyl)-anthranilate (PRA). This is Anthranilate phosphoribosyltransferase from Symbiobacterium thermophilum (strain DSM 24528 / JCM 14929 / IAM 14863 / T).